A 340-amino-acid chain; its full sequence is Protein arginine N-methyltransferase 1 (340 aa).

One can recognise an SAM-dependent MTase PRMT-type domain in the interval 16-311 (KDYYFDSYSH…TCKPAEGNHR (296 aa)). Tyr19 carries the post-translational modification Phosphotyrosine. His29, Arg38, Gly62, Asp84, and Glu113 together coordinate S-adenosyl-L-methionine. Catalysis depends on residues Glu128 and Glu137. Phosphoserine is present on Ser176.

The protein belongs to the class I-like SAM-binding methyltransferase superfamily. Protein arginine N-methyltransferase family. Interacts with pab2.

Its subcellular location is the nucleus. The catalysed reaction is L-arginyl-[protein] + S-adenosyl-L-methionine = N(omega)-methyl-L-arginyl-[protein] + S-adenosyl-L-homocysteine + H(+). It carries out the reaction L-arginyl-[protein] + 2 S-adenosyl-L-methionine = N(omega),N(omega)-dimethyl-L-arginyl-[protein] + 2 S-adenosyl-L-homocysteine + 2 H(+). S-adenosyl-L-methionine-dependent protein-arginine N-methyltransferase that catalyzes both the mono- and asymmetric (type I) dimethylation of the guanidino nitrogens of arginine residues in target proteins. Asymmetrically dimethylates the polyadenylate-binding protein pab2, modulating pab2 oligomerization. The protein is Protein arginine N-methyltransferase 1 of Schizosaccharomyces pombe (strain 972 / ATCC 24843) (Fission yeast).